We begin with the raw amino-acid sequence, 346 residues long: Methylthioribose-1-phosphate isomerase (346 aa).

Residues Arg-44–Ala-46, Arg-87, and Gln-194 each bind substrate. Asp-235 (proton donor) is an active-site residue. A substrate-binding site is contributed by Asn-245–Lys-246.

This sequence belongs to the eIF-2B alpha/beta/delta subunits family. MtnA subfamily.

The enzyme catalyses 5-(methylsulfanyl)-alpha-D-ribose 1-phosphate = 5-(methylsulfanyl)-D-ribulose 1-phosphate. It functions in the pathway amino-acid biosynthesis; L-methionine biosynthesis via salvage pathway; L-methionine from S-methyl-5-thio-alpha-D-ribose 1-phosphate: step 1/6. Its function is as follows. Catalyzes the interconversion of methylthioribose-1-phosphate (MTR-1-P) into methylthioribulose-1-phosphate (MTRu-1-P). The sequence is that of Methylthioribose-1-phosphate isomerase from Desulforamulus reducens (strain ATCC BAA-1160 / DSM 100696 / MI-1) (Desulfotomaculum reducens).